The following is a 153-amino-acid chain: Transcriptional repressor NrdR (153 aa).

A zinc finger lies at 3-33; it reads CPYCNYKESKVIDSRHTDLKSIRRRRECESC. An ATP-cone domain is found at 48–138; that stretch reads LMVIKKDNSR…VYRQFKDINT (91 aa).

This sequence belongs to the NrdR family. The cofactor is Zn(2+).

Its function is as follows. Negatively regulates transcription of bacterial ribonucleotide reductase nrd genes and operons by binding to NrdR-boxes. This chain is Transcriptional repressor NrdR, found in Clostridioides difficile (strain 630) (Peptoclostridium difficile).